The sequence spans 189 residues: Holliday junction branch migration complex subunit RuvA (189 aa).

Positions 1–63 (MIHALNGKVE…DDGISLYGFL (63 aa)) are domain I. Residues 64–135 (EVIKLKLFEK…ELKDTIKELD (72 aa)) are domain II. Positions 135–139 (DVSIN) are flexible linker. Residues 140–189 (EKDRKVLEAIEALVTLGFNRNQAKKAVNKVAAKDDKLDDIIKKALRFLSR) form a domain III region.

It belongs to the RuvA family. As to quaternary structure, homotetramer. Forms an RuvA(8)-RuvB(12)-Holliday junction (HJ) complex. HJ DNA is sandwiched between 2 RuvA tetramers; dsDNA enters through RuvA and exits via RuvB. An RuvB hexamer assembles on each DNA strand where it exits the tetramer. Each RuvB hexamer is contacted by two RuvA subunits (via domain III) on 2 adjacent RuvB subunits; this complex drives branch migration. In the full resolvosome a probable DNA-RuvA(4)-RuvB(12)-RuvC(2) complex forms which resolves the HJ.

Its subcellular location is the cytoplasm. The RuvA-RuvB-RuvC complex processes Holliday junction (HJ) DNA during genetic recombination and DNA repair, while the RuvA-RuvB complex plays an important role in the rescue of blocked DNA replication forks via replication fork reversal (RFR). RuvA specifically binds to HJ cruciform DNA, conferring on it an open structure. The RuvB hexamer acts as an ATP-dependent pump, pulling dsDNA into and through the RuvAB complex. HJ branch migration allows RuvC to scan DNA until it finds its consensus sequence, where it cleaves and resolves the cruciform DNA. This Thermosipho africanus (strain TCF52B) protein is Holliday junction branch migration complex subunit RuvA.